The primary structure comprises 1406 residues: DNA-directed RNA polymerase subunit beta' (1406 aa).

Residues cysteine 70, cysteine 72, cysteine 85, and cysteine 88 each coordinate Zn(2+). Residues aspartate 460, aspartate 462, and aspartate 464 each coordinate Mg(2+). The Zn(2+) site is built by cysteine 814, cysteine 888, cysteine 895, and cysteine 898.

It belongs to the RNA polymerase beta' chain family. The RNAP catalytic core consists of 2 alpha, 1 beta, 1 beta' and 1 omega subunit. When a sigma factor is associated with the core the holoenzyme is formed, which can initiate transcription. Mg(2+) is required as a cofactor. Zn(2+) serves as cofactor.

It carries out the reaction RNA(n) + a ribonucleoside 5'-triphosphate = RNA(n+1) + diphosphate. DNA-dependent RNA polymerase catalyzes the transcription of DNA into RNA using the four ribonucleoside triphosphates as substrates. This chain is DNA-directed RNA polymerase subunit beta', found in Sodalis glossinidius (strain morsitans).